We begin with the raw amino-acid sequence, 262 residues long: NAD-dependent glucose-6-phosphate dehydrogenase (262 aa).

Residues Asn90, Ser115, Tyr152, and Lys156 each coordinate NAD(+). Tyr152 (proton acceptor) is an active-site residue.

It belongs to the NAD(P)-dependent epimerase/dehydratase family. Homodimer.

It catalyses the reaction D-glucose 6-phosphate + NAD(+) = 6-phospho-D-glucono-1,5-lactone + NADH + H(+). It functions in the pathway carbohydrate degradation; pentose phosphate pathway. Catalyzes the NAD-dependent oxidation of glucose 6-phosphate to 6-phosphogluconolactone. The polypeptide is NAD-dependent glucose-6-phosphate dehydrogenase (Haloferax volcanii (strain ATCC 29605 / DSM 3757 / JCM 8879 / NBRC 14742 / NCIMB 2012 / VKM B-1768 / DS2) (Halobacterium volcanii)).